The primary structure comprises 437 residues: uncharacterized protein (437 aa).

Phosphoserine is present on residues S290 and S293. Position 296 is a phosphothreonine (T296). Phosphoserine is present on residues S418 and S428.

This is an uncharacterized protein from Schizosaccharomyces pombe (strain 972 / ATCC 24843) (Fission yeast).